We begin with the raw amino-acid sequence, 471 residues long: Argininosuccinate lyase (471 aa).

This sequence belongs to the lyase 1 family. Argininosuccinate lyase subfamily.

Its subcellular location is the cytoplasm. The catalysed reaction is 2-(N(omega)-L-arginino)succinate = fumarate + L-arginine. The protein operates within amino-acid biosynthesis; L-arginine biosynthesis; L-arginine from L-ornithine and carbamoyl phosphate: step 3/3. The polypeptide is Argininosuccinate lyase (Deinococcus radiodurans (strain ATCC 13939 / DSM 20539 / JCM 16871 / CCUG 27074 / LMG 4051 / NBRC 15346 / NCIMB 9279 / VKM B-1422 / R1)).